The primary structure comprises 415 residues: tRNA(Met) cytidine acetate ligase (415 aa).

Residues 7-20 (VVEYNPFHNGHLYH), Gly101, Asn162, and 187-188 (RI) contribute to the ATP site.

It belongs to the TmcAL family. As to quaternary structure, homodimer.

The protein localises to the cytoplasm. It carries out the reaction cytidine(34) in elongator tRNA(Met) + acetate + ATP = N(4)-acetylcytidine(34) in elongator tRNA(Met) + AMP + diphosphate. Catalyzes the formation of N(4)-acetylcytidine (ac(4)C) at the wobble position of elongator tRNA(Met), using acetate and ATP as substrates. First activates an acetate ion to form acetyladenylate (Ac-AMP) and then transfers the acetyl group to tRNA to form ac(4)C34. In Bacillus subtilis (strain 168), this protein is tRNA(Met) cytidine acetate ligase.